We begin with the raw amino-acid sequence, 488 residues long: UDP-N-acetylmuramate--L-alanine ligase (488 aa).

Residue 127–133 (GTHGKTT) participates in ATP binding.

Belongs to the MurCDEF family.

The protein localises to the cytoplasm. The enzyme catalyses UDP-N-acetyl-alpha-D-muramate + L-alanine + ATP = UDP-N-acetyl-alpha-D-muramoyl-L-alanine + ADP + phosphate + H(+). It functions in the pathway cell wall biogenesis; peptidoglycan biosynthesis. Functionally, cell wall formation. The polypeptide is UDP-N-acetylmuramate--L-alanine ligase (Shewanella putrefaciens (strain CN-32 / ATCC BAA-453)).